Reading from the N-terminus, the 142-residue chain is Putative nickel-responsive regulator (142 aa).

H77, H88, H90, and C96 together coordinate Ni(2+).

This sequence belongs to the transcriptional regulatory CopG/NikR family. Homotetramer. Ni(2+) is required as a cofactor.

In terms of biological role, transcriptional regulator. This is Putative nickel-responsive regulator from Halobacterium salinarum (strain ATCC 700922 / JCM 11081 / NRC-1) (Halobacterium halobium).